A 334-amino-acid chain; its full sequence is H-2 class I histocompatibility antigen, Q7 alpha chain (334 aa).

Residues 1 to 21 (MALTMLLLLVAAALTLIETRA) form the signal peptide. Residues 22-111 (GQHSLQYFHT…AQSYYNQSKG (90 aa)) are alpha-1. Over 22–310 (GQHSLQYFHT…PPYTVSNMAT (289 aa)) the chain is Extracellular. Residue asparagine 107 is glycosylated (N-linked (GlcNAc...) asparagine). Positions 112–203 (GSHTLQWMYG…QLGKETLLRT (92 aa)) are alpha-2. Disulfide bonds link cysteine 122–cysteine 185 and cysteine 224–cysteine 280. Residues 204-295 (DPPKAHVTHH…GLPEPLTLRW (92 aa)) form an alpha-3 region. In terms of domain architecture, Ig-like C1-type spans 206 to 294 (PKAHVTHHPR…EGLPEPLTLR (89 aa)). The N-linked (GlcNAc...) asparagine glycan is linked to asparagine 277. The segment at 296 to 310 (GRWEPPPYTVSNMAT) is connecting peptide. A helical membrane pass occupies residues 311–332 (IAVVVDLGAVAIIGAVVAFVMN).

This sequence belongs to the MHC class I family. In terms of assembly, heterodimer of an alpha chain and a beta chain (beta-2-microglobulin).

It is found in the membrane. Its function is as follows. Involved in the presentation of foreign antigens to the immune system. The sequence is that of H-2 class I histocompatibility antigen, Q7 alpha chain (H2-Q7) from Mus musculus (Mouse).